The primary structure comprises 274 residues: Large ribosomal subunit protein uL2 (274 aa).

The disordered stretch occupies residues 224–256; that stretch reads VMNPVDHPHGGGEGKTGEGRHPVDPWGNLTKGY. Residues 229-246 show a composition bias toward basic and acidic residues; it reads DHPHGGGEGKTGEGRHPV.

Belongs to the universal ribosomal protein uL2 family. In terms of assembly, part of the 50S ribosomal subunit. Forms a bridge to the 30S subunit in the 70S ribosome.

Its function is as follows. One of the primary rRNA binding proteins. Required for association of the 30S and 50S subunits to form the 70S ribosome, for tRNA binding and peptide bond formation. It has been suggested to have peptidyltransferase activity; this is somewhat controversial. Makes several contacts with the 16S rRNA in the 70S ribosome. This is Large ribosomal subunit protein uL2 from Polaromonas sp. (strain JS666 / ATCC BAA-500).